The chain runs to 301 residues: Methionine aminopeptidase (301 aa).

A substrate-binding site is contributed by His65. Positions 85, 96, and 156 each coordinate a divalent metal cation. His164 serves as a coordination point for substrate. Residues Glu189 and Glu284 each contribute to the a divalent metal cation site.

It belongs to the peptidase M24A family. Methionine aminopeptidase archaeal type 2 subfamily. As to quaternary structure, monomer. Requires Co(2+) as cofactor. The cofactor is Zn(2+). It depends on Mn(2+) as a cofactor. Fe(2+) is required as a cofactor.

It catalyses the reaction Release of N-terminal amino acids, preferentially methionine, from peptides and arylamides.. Functionally, removes the N-terminal methionine from nascent proteins. The N-terminal methionine is often cleaved when the second residue in the primary sequence is small and uncharged (Met-Ala-, Cys, Gly, Pro, Ser, Thr, or Val). This Saccharolobus solfataricus (strain ATCC 35092 / DSM 1617 / JCM 11322 / P2) (Sulfolobus solfataricus) protein is Methionine aminopeptidase.